A 466-amino-acid chain; its full sequence is Amidase (466 aa).

Active-site charge relay system residues include Lys79 and Ser148. The tract at residues 128 to 152 (YGRITPKSRNPRDPGRTPGGSSGGS) is disordered. The Acyl-ester intermediate role is filled by Ser172.

The protein belongs to the amidase family.

It catalyses the reaction a monocarboxylic acid amide + H2O = a monocarboxylate + NH4(+). This is Amidase from Pseudomonas putida (Arthrobacter siderocapsulatus).